We begin with the raw amino-acid sequence, 186 residues long: ATP synthase subunit b (186 aa).

The chain crosses the membrane as a helical span at residues 28-48 (IVWSIIPFAVILFVFAKVVLP).

The protein belongs to the ATPase B chain family. In terms of assembly, F-type ATPases have 2 components, F(1) - the catalytic core - and F(0) - the membrane proton channel. F(1) has five subunits: alpha(3), beta(3), gamma(1), delta(1), epsilon(1). F(0) has three main subunits: a(1), b(2) and c(10-14). The alpha and beta chains form an alternating ring which encloses part of the gamma chain. F(1) is attached to F(0) by a central stalk formed by the gamma and epsilon chains, while a peripheral stalk is formed by the delta and b chains.

It is found in the cell membrane. In terms of biological role, f(1)F(0) ATP synthase produces ATP from ADP in the presence of a proton or sodium gradient. F-type ATPases consist of two structural domains, F(1) containing the extramembraneous catalytic core and F(0) containing the membrane proton channel, linked together by a central stalk and a peripheral stalk. During catalysis, ATP synthesis in the catalytic domain of F(1) is coupled via a rotary mechanism of the central stalk subunits to proton translocation. Functionally, component of the F(0) channel, it forms part of the peripheral stalk, linking F(1) to F(0). This chain is ATP synthase subunit b, found in Corynebacterium urealyticum (strain ATCC 43042 / DSM 7109).